Here is an 88-residue protein sequence, read N- to C-terminus: Elongation factor 1-beta (88 aa).

This sequence belongs to the EF-1-beta/EF-1-delta family.

In terms of biological role, promotes the exchange of GDP for GTP in EF-1-alpha/GDP, thus allowing the regeneration of EF-1-alpha/GTP that could then be used to form the ternary complex EF-1-alpha/GTP/AAtRNA. This chain is Elongation factor 1-beta (ef1b), found in Archaeoglobus fulgidus (strain ATCC 49558 / DSM 4304 / JCM 9628 / NBRC 100126 / VC-16).